Consider the following 100-residue polypeptide: Urease subunit gamma (100 aa).

The protein belongs to the urease gamma subunit family. In terms of assembly, heterotrimer of UreA (gamma), UreB (beta) and UreC (alpha) subunits. Three heterotrimers associate to form the active enzyme.

Its subcellular location is the cytoplasm. It carries out the reaction urea + 2 H2O + H(+) = hydrogencarbonate + 2 NH4(+). It functions in the pathway nitrogen metabolism; urea degradation; CO(2) and NH(3) from urea (urease route): step 1/1. The sequence is that of Urease subunit gamma from Rhodopseudomonas palustris (strain BisB5).